The chain runs to 660 residues: 1-deoxy-D-xylulose-5-phosphate synthase (660 aa).

Thiamine diphosphate is bound by residues His86 and 127 to 129 (AHS). Residue Asp164 coordinates Mg(2+). Residues 165 to 166 (GS), Asn196, Tyr306, and Glu388 each bind thiamine diphosphate. Asn196 is a binding site for Mg(2+).

It belongs to the transketolase family. DXPS subfamily. In terms of assembly, homodimer. The cofactor is Mg(2+). Thiamine diphosphate is required as a cofactor.

It catalyses the reaction D-glyceraldehyde 3-phosphate + pyruvate + H(+) = 1-deoxy-D-xylulose 5-phosphate + CO2. Its pathway is metabolic intermediate biosynthesis; 1-deoxy-D-xylulose 5-phosphate biosynthesis; 1-deoxy-D-xylulose 5-phosphate from D-glyceraldehyde 3-phosphate and pyruvate: step 1/1. Its function is as follows. Catalyzes the acyloin condensation reaction between C atoms 2 and 3 of pyruvate and glyceraldehyde 3-phosphate to yield 1-deoxy-D-xylulose-5-phosphate (DXP). In Gluconobacter oxydans (strain 621H) (Gluconobacter suboxydans), this protein is 1-deoxy-D-xylulose-5-phosphate synthase.